The following is a 389-amino-acid chain: Equilibrative nucleotide transporter 8 (389 aa).

10 helical membrane-spanning segments follow: residues 19-39 (VAYVIHFLLGAGSLIPWNALI), 57-77 (TFTVAYMSCSVLVLVLMMTWN), 87-107 (NLGFSMFIIAMMISPLIDWVW), 119-139 (LMVGSVVLCGLADGVVGGSLI), 150-170 (MQAIFAGTASSGIIISLLRIA), 187-207 (HSYFIVSSTILLCCFISCNVL), 238-258 (WPASGMLIIYSVTLSIFPGFI), 266-286 (LLQSWYPILLITVYNISDFVG), 331-351 (VVVLTFMLGLTNGYLTSVLMI), and 367-387 (IFMVVFLGLGLVCGSVIGWLW).

This sequence belongs to the SLC29A/ENT transporter (TC 2.A.57) family. In terms of tissue distribution, expressed in stems, flowers and siliques.

Its subcellular location is the cell membrane. In terms of biological role, may be involved in nucleoside transport. This is Equilibrative nucleotide transporter 8 (ETN8) from Arabidopsis thaliana (Mouse-ear cress).